A 492-amino-acid chain; its full sequence is Glutamyl-tRNA(Gln) amidotransferase subunit A (492 aa).

Active-site charge relay system residues include K79 and S154. S178 serves as the catalytic Acyl-ester intermediate.

It belongs to the amidase family. GatA subfamily. Heterotrimer of A, B and C subunits.

The enzyme catalyses L-glutamyl-tRNA(Gln) + L-glutamine + ATP + H2O = L-glutaminyl-tRNA(Gln) + L-glutamate + ADP + phosphate + H(+). Functionally, allows the formation of correctly charged Gln-tRNA(Gln) through the transamidation of misacylated Glu-tRNA(Gln) in organisms which lack glutaminyl-tRNA synthetase. The reaction takes place in the presence of glutamine and ATP through an activated gamma-phospho-Glu-tRNA(Gln). The polypeptide is Glutamyl-tRNA(Gln) amidotransferase subunit A (Acinetobacter baumannii (strain AB0057)).